The primary structure comprises 457 residues: Peptidyl-prolyl cis-trans isomerase FKBP5 (457 aa).

N-acetylmethionine is present on M1. Positions 1–11 are enriched in basic and acidic residues; that stretch reads MTTDEGAKSSR. The interval 1–28 is disordered; the sequence is MTTDEGAKSSRENPAATVAEQGEDVTSK. Residue K28 is modified to N6-acetyllysine. PPIase FKBP-type domains lie at 50–138 and 165–251; these read GDKV…LNFK and GARV…KSFE. TPR repeat units lie at residues 268–301, 317–350, and 351–384; these read AAIV…LEME, LAAF…DSAN, and EKGL…NPQN. A disordered region spans residues 424–457; sequence EANKAVSKKTSEGVTNEKLTVSHAVEEEKPEGHV. Position 445 is a phosphoserine (S445). The span at 447 to 457 shows a compositional bias: basic and acidic residues; it reads AVEEEKPEGHV.

Part of a heteromultimeric cytoplasmic complex with HSP90AA1, HSPA1A/HSPA1B and steroid receptors. Upon ligand binding dissociates from the complex and FKBP4 takes its place. Interacts with functionally mature heterooligomeric progesterone receptor complexes along with HSP90 and TEBP. Interacts with NR3C1. Interacts with Akt/AKT1 and PHLPP1; enhancing dephosphorylation and subsequent activation of Akt/AKT1. Interacts with IFI44L; this interaction modulates the kinase activity of IKBKB and IKBKE. Interacts with IKBKB and IKBKE. Post-translationally, acetylation impairs ability to promote interaction between Akt/AKT1 and PHLPP1. Deacetylation by SIRT7 promotes interaction between Akt/AKT1 and PHLPP1, leading to suppress Akt/AKT1 activation. Ubiquitinated, leading to degradation in a proteasome-dependent manner. Deubiquitinated by USP49, leading to stabilization.

It localises to the cytoplasm. Its subcellular location is the nucleus. The catalysed reaction is [protein]-peptidylproline (omega=180) = [protein]-peptidylproline (omega=0). Its activity is regulated as follows. Inhibited by both FK506 and rapamycin. Its function is as follows. Immunophilin protein with PPIase and co-chaperone activities. Component of unligated steroid receptors heterocomplexes through interaction with heat-shock protein 90 (HSP90). Plays a role in the intracellular trafficking of heterooligomeric forms of steroid hormone receptors maintaining the complex into the cytoplasm when unliganded. Acts as a regulator of Akt/AKT1 activity by promoting the interaction between Akt/AKT1 and PHLPP1, thereby enhancing dephosphorylation and subsequent activation of Akt/AKT1. Interacts with IKBKE and IKBKB which facilitates IKK complex assembly leading to increased IKBKE and IKBKB kinase activity, NF-kappaB activation, and IFN production. The sequence is that of Peptidyl-prolyl cis-trans isomerase FKBP5 (FKBP5) from Saguinus oedipus (Cotton-top tamarin).